A 295-amino-acid chain; its full sequence is Probable aspartoacylase (295 aa).

The Zn(2+) site is built by histidine 16 and glutamate 19. Substrate-binding positions include arginine 58 and 65–66 (NR). Position 107 (histidine 107) interacts with Zn(2+). Substrate contacts are provided by glutamate 166 and tyrosine 277.

This sequence belongs to the AspA/AstE family. Aspartoacylase subfamily. It depends on Zn(2+) as a cofactor.

The catalysed reaction is an N-acyl-L-aspartate + H2O = a carboxylate + L-aspartate. This Acaryochloris marina (strain MBIC 11017) protein is Probable aspartoacylase.